Consider the following 190-residue polypeptide: Ferric nitrobindin-like protein (190 aa).

A GXWXGXG motif is present at residues 20-26 (GNWAGAG).

This sequence belongs to the nitrobindin family.

This is Ferric nitrobindin-like protein from Streptomyces griseus subsp. griseus (strain JCM 4626 / CBS 651.72 / NBRC 13350 / KCC S-0626 / ISP 5235).